A 125-amino-acid polypeptide reads, in one-letter code: Ribosome-binding factor A (125 aa).

It belongs to the RbfA family. Monomer. Binds 30S ribosomal subunits, but not 50S ribosomal subunits or 70S ribosomes.

It localises to the cytoplasm. In terms of biological role, one of several proteins that assist in the late maturation steps of the functional core of the 30S ribosomal subunit. Associates with free 30S ribosomal subunits (but not with 30S subunits that are part of 70S ribosomes or polysomes). Required for efficient processing of 16S rRNA. May interact with the 5'-terminal helix region of 16S rRNA. This Chloroherpeton thalassium (strain ATCC 35110 / GB-78) protein is Ribosome-binding factor A.